Consider the following 356-residue polypeptide: Protein HEXIM1 (356 aa).

2 stretches are compositionally biased toward basic and acidic residues: residues 1-11 (MAEPLLTEHQH) and 24-47 (VHEEHTSERPPSAEERVPKEDSRW). Positions 1–162 (MAEPLLTEHQ…RPSKKKRHWK (162 aa)) are disordered. Polar residues predominate over residues 48-58 (QSRASLQSGSR). Over residues 84 to 93 (SLEKGEKGQN) the composition is skewed to basic and acidic residues. Residues Ser98 and Ser103 each carry the phosphoserine modification. Over residues 145–162 (LGKKKHRRRPSKKKRHWK) the composition is skewed to basic residues. The segment at 147 to 174 (KKKHRRRPSKKKRHWKPYYKLTWEEKKK) is basic region; mediates nuclear localization and interaction with 7SK snRNA and NR3C1. Residues 199-202 (PYNT) are interaction with P-TEFb. The interval 207 to 247 (MDDHDQEEPDLKTGLYPKRAAAKSDDTSDEDFVEEAGEEDG) is autoinhibitory acidic region; in absence of 7SK snRNA interacts with the basic region preventing interaction with P-TEFb and modulating subcellular localization. Positions 210–259 (HDQEEPDLKTGLYPKRAAAKSDDTSDEDFVEEAGEEDGGSDGMGGDGSEF) are disordered. A Phosphoserine modification is found at Ser230. Thr233 is modified (phosphothreonine). The segment covering 233–248 (TSDEDFVEEAGEEDGG) has biased composition (acidic residues). Residues Ser234, Ser249, and Ser257 each carry the phosphoserine modification. The stretch at 280-346 (SKQELIKEYL…LTENELHRQQ (67 aa)) forms a coiled coil. Residues 283–311 (ELIKEYLELEKCLSRKEDENNRLRLESKR) are mediates interaction with CCNT1. The segment at 307–352 (LESKRLGGVDARVRELELELDRLRAENLQLLTENELHRQQERAPLS) is required for inhibition of ESR1-dependent transcription.

Belongs to the HEXIM family. Homooligomer and heterooligomer with HEXIM2; probably dimeric. Core component of the 7SK RNP complex, at least composed of 7SK RNA, LARP7, MEPCE, HEXIM1 (or HEXIM2) and P-TEFb (composed of CDK9 and CCNT1/cyclin-T1). Interacts with the N-CoR complex through NCOR1. Interacts with ESR1 and NR3C1. May interact with NF-kappa-B through RELA. Interacts with CCNT2; mediates formation of a tripartite complex with KPNA2. Part of the HDP-RNP complex composed of at least HEXIM1, PRKDC, XRCC5, XRCC6, paraspeckle proteins (SFPQ, NONO, PSPC1, RBM14, and MATR3) and NEAT1 non-coding RNA. As to expression, widely expressed with higher expression in heart, skeletal muscle and brain (at protein level).

It is found in the nucleus. Its subcellular location is the cytoplasm. In terms of biological role, transcriptional regulator which functions as a general RNA polymerase II transcription inhibitor. Core component of the 7SK RNP complex: in cooperation with 7SK snRNA sequesters P-TEFb in a large inactive 7SK snRNP complex preventing RNA polymerase II phosphorylation and subsequent transcriptional elongation. May also regulate NF-kappa-B, ESR1, NR3C1 and CIITA-dependent transcriptional activity. Plays a role in the regulation of DNA virus-mediated innate immune response by assembling into the HDP-RNP complex, a complex that serves as a platform for IRF3 phosphorylation and subsequent innate immune response activation through the cGAS-STING pathway. In Mus musculus (Mouse), this protein is Protein HEXIM1 (Hexim1).